Here is a 480-residue protein sequence, read N- to C-terminus: UDP-glucose 6-dehydrogenase 4 (480 aa).

Residues 8–13 (GAGYVG), D33, R38, 86–90 (VNTPT), 127–128 (ST), and E161 contribute to the NAD(+) site. Substrate contacts are provided by residues 157 to 161 (EFLAE), 216 to 223 (KLAANAFL), and 256 to 269 (RIGP…VGFG). Residue C272 is the Nucleophile of the active site. Residue 272 to 275 (CFQK) participates in NAD(+) binding. 334–335 (FK) serves as a coordination point for substrate. R342 contacts NAD(+). S393 bears the Phosphoserine mark. R447 lines the substrate pocket.

Belongs to the UDP-glucose/GDP-mannose dehydrogenase family.

The enzyme catalyses UDP-alpha-D-glucose + 2 NAD(+) + H2O = UDP-alpha-D-glucuronate + 2 NADH + 3 H(+). Its pathway is nucleotide-sugar biosynthesis; UDP-alpha-D-glucuronate biosynthesis; UDP-alpha-D-glucuronate from UDP-alpha-D-glucose: step 1/1. Its function is as follows. Involved in the biosynthesis of UDP-glucuronic acid (UDP-GlcA), providing nucleotide sugars for cell-wall polymers. The polypeptide is UDP-glucose 6-dehydrogenase 4 (UGD4) (Oryza sativa subsp. japonica (Rice)).